The chain runs to 353 residues: Guanine nucleotide-binding protein subunit alpha (353 aa).

The disordered stretch occupies residues methionine 1–asparagine 21. Glycine 2 carries the N-myristoyl glycine lipid modification. Cysteine 3 carries S-palmitoyl cysteine lipidation. Positions threonine 7–asparagine 21 are enriched in basic and acidic residues. A G-alpha domain is found at asparagine 32 to isoleucine 353. Positions lysine 35–threonine 48 are G1 motif. Positions 43, 44, 45, 46, 47, 48, 150, 175, 181, 203, 269, 270, 272, and 325 each coordinate GTP. Position 47 (serine 47) interacts with Mg(2+). The interval aspartate 173–threonine 181 is G2 motif. Threonine 181 is a binding site for Mg(2+). The interval tyrosine 196–arginine 205 is G3 motif. Residues isoleucine 265–aspartate 272 are G4 motif. A G5 motif region spans residues threonine 323–threonine 328.

The protein belongs to the G-alpha family. G(q) subfamily. As to quaternary structure, g proteins are composed of 3 units; alpha, beta and gamma. The alpha chain contains the guanine nucleotide binding site. It depends on Mg(2+) as a cofactor.

Its function is as follows. Guanine nucleotide-binding proteins (G proteins) are involved as modulators or transducers in various transmembrane signaling systems. Plays a role in pathogenicity, specifically in appressorium formation in rice blast disease. Also involved in mating. This Pyricularia oryzae (strain 70-15 / ATCC MYA-4617 / FGSC 8958) (Rice blast fungus) protein is Guanine nucleotide-binding protein subunit alpha (MAGB).